The sequence spans 366 residues: RNA 3'-terminal phosphate cyclase (366 aa).

Gln104, Pro131, Tyr294, Asp297, Gln298, and His320 together coordinate ATP. His320 functions as the Tele-AMP-histidine intermediate in the catalytic mechanism.

The protein belongs to the RNA 3'-terminal cyclase family. Type 1 subfamily. Detected in retinal ganglion cells (RGCs) (at protein level).

It is found in the nucleus. Its subcellular location is the nucleoplasm. The catalysed reaction is a 3'-end 3'-phospho-ribonucleotide-RNA + ATP = a 3'-end 2',3'-cyclophospho-ribonucleotide-RNA + AMP + diphosphate. Its function is as follows. Catalyzes the conversion of 3'-phosphate to a 2',3'-cyclic phosphodiester at the end of RNA. The mechanism of action of the enzyme occurs in 3 steps: (A) adenylation of the enzyme by ATP; (B) transfer of adenylate to an RNA-N3'P to produce RNA-N3'PP5'A; (C) and attack of the adjacent 2'-hydroxyl on the 3'-phosphorus in the diester linkage to produce the cyclic end product. Likely functions in some aspects of cellular RNA processing. Function plays an important role in regulating axon regeneration by inhibiting central nervous system (CNS) axon regeneration following optic nerve injury. The protein is RNA 3'-terminal phosphate cyclase of Mus musculus (Mouse).